The following is a 425-amino-acid chain: Serine--tRNA ligase (425 aa).

231–233 (TAE) is a binding site for L-serine. 262 to 264 (RSE) serves as a coordination point for ATP. Position 285 (glutamate 285) interacts with L-serine. Residue 349-352 (EISS) participates in ATP binding. Serine 385 contacts L-serine.

This sequence belongs to the class-II aminoacyl-tRNA synthetase family. Type-1 seryl-tRNA synthetase subfamily. In terms of assembly, homodimer. The tRNA molecule binds across the dimer.

The protein resides in the cytoplasm. The catalysed reaction is tRNA(Ser) + L-serine + ATP = L-seryl-tRNA(Ser) + AMP + diphosphate + H(+). It catalyses the reaction tRNA(Sec) + L-serine + ATP = L-seryl-tRNA(Sec) + AMP + diphosphate + H(+). Its pathway is aminoacyl-tRNA biosynthesis; selenocysteinyl-tRNA(Sec) biosynthesis; L-seryl-tRNA(Sec) from L-serine and tRNA(Sec): step 1/1. In terms of biological role, catalyzes the attachment of serine to tRNA(Ser). Is also able to aminoacylate tRNA(Sec) with serine, to form the misacylated tRNA L-seryl-tRNA(Sec), which will be further converted into selenocysteinyl-tRNA(Sec). In Exiguobacterium sibiricum (strain DSM 17290 / CCUG 55495 / CIP 109462 / JCM 13490 / 255-15), this protein is Serine--tRNA ligase.